Here is a 106-residue protein sequence, read N- to C-terminus: Nucleoid-associated protein RPD_0086 (106 aa).

This sequence belongs to the YbaB/EbfC family. In terms of assembly, homodimer.

It is found in the cytoplasm. The protein localises to the nucleoid. Its function is as follows. Binds to DNA and alters its conformation. May be involved in regulation of gene expression, nucleoid organization and DNA protection. The protein is Nucleoid-associated protein RPD_0086 of Rhodopseudomonas palustris (strain BisB5).